We begin with the raw amino-acid sequence, 137 residues long: Protein phosphatase 1 regulatory subunit 1B (137 aa).

Residues 1-137 are disordered; it reads DPKDRKKIQF…EEEEEEEDSQ (137 aa). Threonine 33 bears the Phosphothreonine; by PKA mark. The segment covering 40–62 has biased composition (basic and acidic residues); it reads LXEHSSPEEEASPHQRAAGEGHH. Residues serine 44 and serine 45 each carry the phosphoserine modification. Phosphothreonine; by CDK5 is present on threonine 74. The span at 88–99 shows a compositional bias: polar residues; the sequence is HLQSISNLGENQ. At serine 101 the chain carries Phosphoserine. Positions 108 to 117 are enriched in basic and acidic residues; the sequence is GELRELGYPR. Residues 118–137 are compositionally biased toward acidic residues; the sequence is EEEEEEEEDDEEEEEEEDSQ. Serine 136 bears the Phosphoserine mark.

The protein belongs to the protein phosphatase inhibitor 1 family. Phosphorylation of Thr-33 is required for activity. Post-translationally, dopamine- and cyclic AMP-regulated neuronal phosphoprotein.

It localises to the cytoplasm. Inhibitor of protein-phosphatase 1. The chain is Protein phosphatase 1 regulatory subunit 1B (PPP1R1B) from Sus scrofa (Pig).